The chain runs to 364 residues: WAT1-related protein At5g47470 (364 aa).

10 helical membrane-spanning segments follow: residues 28–48, 59–79, 93–113, 124–144, 158–178, 197–217, 228–248, 255–275, 293–313, and 319–339; these read MVIV…SLLM, FTIV…FAIL, LIGK…SLFL, ATAM…IVGL, ILGT…HSTS, VVGC…VVLQ, ISLS…VLLL, VLAS…LAGA, PVFV…FAVL, and VSLG…LVLW. In terms of domain architecture, EamA 1 spans 40–172; that stretch reads VYAGNSLLMS…LCVFGALAMS (133 aa). An EamA 2 domain is found at 219 to 338; that stretch reads STLAEFPAPI…LMFVGLYLVL (120 aa).

Belongs to the drug/metabolite transporter (DMT) superfamily. Plant drug/metabolite exporter (P-DME) (TC 2.A.7.4) family.

It is found in the membrane. The protein is WAT1-related protein At5g47470 of Arabidopsis thaliana (Mouse-ear cress).